A 432-amino-acid chain; its full sequence is PC-esterase domain-containing protein 1B (432 aa).

Disordered regions lie at residues 264–293 and 398–432; these read EWIKKKKPGPRVEGPPQANRNHPALPLSPP and RGFGRYRPRGPYTPWGQRPRPSKRRAPANPEPRPQ.

Belongs to the PC-esterase family.

This chain is PC-esterase domain-containing protein 1B, found in Homo sapiens (Human).